Here is a 73-residue protein sequence, read N- to C-terminus: Disintegrin lutosin (73 aa).

The Disintegrin domain occupies 1–73 (EAGEECDCGS…ADCPRNGLYG (73 aa)). Disulfide bonds link Cys6–Cys21, Cys8–Cys16, Cys15–Cys38, Cys29–Cys35, Cys34–Cys59, and Cys47–Cys66. The short motif at 51 to 53 (RGD) is the Cell attachment site element.

Belongs to the venom metalloproteinase (M12B) family. P-II subfamily. P-IIa sub-subfamily. Monomer (disintegrin). In terms of tissue distribution, expressed by the venom gland.

The protein resides in the secreted. Inhibits fibrinogen interaction with platelets. Acts by binding to alpha-IIb/beta-3 (ITGA2B/ITGB3) on the platelet surface and inhibits aggregation induced by ADP, thrombin, platelet-activating factor and collagen. In Crotalus lutosus (Great basin rattlesnake), this protein is Disintegrin lutosin.